A 532-amino-acid polypeptide reads, in one-letter code: 56 kDa type-specific antigen (532 aa).

A signal peptide spans 1 to 22 (MKKIMLIASAMSALSLPFSASA). Residues 67 to 87 (TNGLPFGGTLAAGMTIAPGFR) form a helical membrane-spanning segment. The disordered stretch occupies residues 401 to 428 (QEEDAKNQGEGDCKQQQGTSEKSKKGKD). Basic and acidic residues predominate over residues 403 to 413 (EDAKNQGEGDC). The chain crosses the membrane as a helical span at residues 480–500 (TGMVASGALGVAINAAEGVYV).

The protein localises to the cell membrane. Its function is as follows. May be an adherent factor for rickettsial adsorption to the host-cell surface and a determinant of virulence of individual rickettsial strain. It is the major outer membrane protein. This Orientia tsutsugamushi (Rickettsia tsutsugamushi) protein is 56 kDa type-specific antigen.